The chain runs to 270 residues: Centriole, cilia and spindle-associated protein (270 aa).

Position 1 is an N-acetylmethionine (Met-1). Residues 9 to 15 carry the ST]-E-Y-X(3)-Y motif 1; required for efficient microtubule binding and stabilization motif; it reads SEYMKRY. Disordered regions lie at residues 50–201 and 231–255; these read DDWG…SQKT and LVAQ…SSSE. Positions 53–67 are enriched in low complexity; sequence GPAGSSEDSASSESS. The segment covering 75-86 has biased composition (pro residues); it reads RCAPPSPPPPVE. A compositionally biased stretch (basic and acidic residues) spans 92-101; it reads EAERRARGAP. Acidic residues predominate over residues 102–118; that stretch reads EEQDAEAGDAEAEDAED. Basic and acidic residues predominate over residues 127-144; sequence KDVEDKPEQQTRTRETDK. Over residues 145–156 the composition is skewed to polar residues; that stretch reads SPTSTEPRQQPS. The ST]-E-Y-X(3)-Y motif 2; required for efficient microtubule binding and stabilization signature appears at 260–266; that stretch reads TEYMRCY.

It belongs to the CCSAP family. As to quaternary structure, associates with microtubules; the association occurs on polyglutamylated tubulin.

It localises to the cytoplasm. It is found in the cytoskeleton. Its subcellular location is the microtubule organizing center. The protein localises to the centrosome. The protein resides in the centriole. It localises to the spindle. It is found in the cilium basal body. Its subcellular location is the cilium axoneme. The protein localises to the cell projection. The protein resides in the axon. It localises to the cilium. Functionally, plays a role in microtubule (MT) stabilization and this stabilization involves the maintenance of NUMA1 at the spindle poles. Colocalizes with polyglutamylated MTs to promote MT stabilization and regulate bipolar spindle formation in mitosis. Binding of CCSAP to centrosomes and the spindle around centrosomes during mitosis inhibits MT depolymerization, thereby stabilizing the mitotic spindle. May play a role in embryonic development. May be required for proper cilia beating. This is Centriole, cilia and spindle-associated protein (CCSAP) from Homo sapiens (Human).